The following is a 616-amino-acid chain: Replication protein A 70 kDa DNA-binding subunit (616 aa).

Methionine 1 carries the N-acetylmethionine modification. Residues lysine 22 and lysine 88 each participate in a glycyl lysine isopeptide (Lys-Gly) (interchain with G-Cter in ubiquitin) cross-link. The disordered stretch occupies residues 121–155 (GLGQPQVAPPAPAASPAASSRPQPQNGTSGAGSTV). Positions 134–145 (ASPAASSRPQPQ) are enriched in low complexity. Positions 146–155 (NGTSGAGSTV) are enriched in polar residues. Residues lysine 163 and lysine 167 each carry the N6-acetyllysine; alternate modification. Residues lysine 163 and lysine 167 each participate in a glycyl lysine isopeptide (Lys-Gly) (interchain with G-Cter in ubiquitin); alternate cross-link. Phosphothreonine is present on threonine 180. Lysine 183 participates in a covalent cross-link: Glycyl lysine isopeptide (Lys-Gly) (interchain with G-Cter in ubiquitin). Threonine 191 carries the post-translational modification Phosphothreonine. Residues 197 to 281 (WTICARVTNK…VKNDYEMTFN (85 aa)) constitute a DNA-binding region (OB). Glycyl lysine isopeptide (Lys-Gly) (interchain with G-Cter in ubiquitin) cross-links involve residues lysine 220 and lysine 244. At lysine 259 the chain carries N6-acetyllysine; alternate. Lysine 259 participates in a covalent cross-link: Glycyl lysine isopeptide (Lys-Gly) (interchain with G-Cter in ubiquitin); alternate. Residues lysine 267 and lysine 331 each participate in a glycyl lysine isopeptide (Lys-Gly) (interchain with G-Cter in ubiquitin) cross-link. Serine 384 is modified (phosphoserine). Glycyl lysine isopeptide (Lys-Gly) (interchain with G-Cter in ubiquitin) cross-links involve residues lysine 410 and lysine 431. Lysine 449 participates in a covalent cross-link: Glycyl lysine isopeptide (Lys-Gly) (interchain with G-Cter in SUMO). Residue lysine 458 forms a Glycyl lysine isopeptide (Lys-Gly) (interchain with G-Cter in ubiquitin) linkage. The C4-type zinc-finger motif lies at 481–503 (CPTQDCNKKVIDQQNGLYRCEKC). Residue lysine 553 forms a Glycyl lysine isopeptide (Lys-Gly) (interchain with G-Cter in ubiquitin) linkage. Lysine 577 participates in a covalent cross-link: Glycyl lysine isopeptide (Lys-Gly) (interchain with G-Cter in SUMO).

The protein belongs to the replication factor A protein 1 family. As to quaternary structure, component of the canonical replication protein A complex (RPA), a heterotrimer composed of RPA1, RPA2 and RPA3. The DNA-binding activity may reside exclusively on the RPA1 subunit. Interacts with PRPF19; the PRP19-CDC5L complex is recruited to the sites of DNA repair where it ubiquitinates the replication protein A complex (RPA). Interacts with RIPK1. Interacts with the polymerase alpha subunit POLA1/p180; this interaction stabilizes the replicative complex and reduces the misincorporation rate of DNA polymerase alpha by acting as a fidelity clamp. Interacts with RAD51 and SENP6 to regulate DNA repair. Interacts with HELB; this interaction promotes HELB recruitment to chromatin following DNA damage. Interacts with PRIMPOL; leading to recruit PRIMPOL on chromatin and stimulate its DNA primase activity. Interacts with XPA; the interaction is direct and associates XPA with the RPA complex. Interacts with ETAA1; the interaction is direct and promotes ETAA1 recruitment at stalled replication forks. Interacts with RPA1; this interaction associates HROB with the RPA complex. Interacts (when poly-ADP-ribosylated) with HTATSF1. Post-translationally, DNA damage-induced 'Lys-63'-linked polyubiquitination by PRPF19 mediates ATRIP recruitment to the RPA complex at sites of DNA damage and activation of ATR. Ubiquitinated by RFWD3 at stalled replication forks in response to DNA damage: ubiquitination by RFWD3 does not lead to degradation by the proteasome and promotes removal of the RPA complex from stalled replication forks, promoting homologous recombination. In terms of processing, sumoylated on lysine residues Lys-449 and Lys-577, with Lys-449 being the major site. Sumoylation promotes recruitment of RAD51 to the DNA damage foci to initiate DNA repair through homologous recombination. Desumoylated by SENP6. Poly-ADP-ribosylated by PARP1; promoting recruitment of HTATSF1.

The protein localises to the nucleus. It is found in the PML body. As part of the heterotrimeric replication protein A complex (RPA/RP-A), binds and stabilizes single-stranded DNA intermediates, that form during DNA replication or upon DNA stress. It prevents their reannealing and in parallel, recruits and activates different proteins and complexes involved in DNA metabolism. Thereby, it plays an essential role both in DNA replication and the cellular response to DNA damage. In the cellular response to DNA damage, the RPA complex controls DNA repair and DNA damage checkpoint activation. Through recruitment of ATRIP activates the ATR kinase a master regulator of the DNA damage response. It is required for the recruitment of the DNA double-strand break repair factors RAD51 and RAD52 to chromatin in response to DNA damage. Also recruits to sites of DNA damage proteins like XPA and XPG that are involved in nucleotide excision repair and is required for this mechanism of DNA repair. Also plays a role in base excision repair (BER) probably through interaction with UNG. Also recruits SMARCAL1/HARP, which is involved in replication fork restart, to sites of DNA damage. May also play a role in telomere maintenance. This chain is Replication protein A 70 kDa DNA-binding subunit (RPA1), found in Pongo abelii (Sumatran orangutan).